The following is a 161-amino-acid chain: Putative pre-16S rRNA nuclease (161 aa).

The protein belongs to the YqgF nuclease family.

The protein localises to the cytoplasm. Could be a nuclease involved in processing of the 5'-end of pre-16S rRNA. In Bradyrhizobium diazoefficiens (strain JCM 10833 / BCRC 13528 / IAM 13628 / NBRC 14792 / USDA 110), this protein is Putative pre-16S rRNA nuclease.